The chain runs to 370 residues: MSGPRTCFCLPSALVLVLLSLSTSALGTAPEPSGVHEESPAGGGTDLLPHPEDLSASDNPDLEFVKRLYDFGLGKRAYSYVSEYKRLPVYNFGLGKRSKMYGFGLGKRDGRMYSFGLGKRDYDYYGEEDEDDQQAIGDEDIEESDVGDLMDKRDRLYSFGLGKRARPYSFGLGKRAPSGAQRLYGFGLGKRGGSLYSFGLGKRGDGRLYAFGLGKRPVNSGRSSGSRFNFGLGKRSDDIDFRELEEKFAEDKRYPQEHRFSFGLGKREVEPSELEAVRNEEKDNSSVHDKKNNTNDMHSGERIKRSLHYPFGIRKLESSYDLNSASSLNSEENDDITPEEFSRMVRRPFNFGLGKRIPMYDFGIGKRSER.

Positions 1-27 (MSGPRTCFCLPSALVLVLLSLSTSALG) are cleaved as a signal peptide. Positions 28–65 (TAPEPSGVHEESPAGGGTDLLPHPEDLSASDNPDLEFV) are excised as a propeptide. A disordered region spans residues 29–58 (APEPSGVHEESPAGGGTDLLPHPEDLSASD). L73, L94, L105, and L117 each carry leucine amide. Residues 121 to 151 (DYDYYGEEDEDDQQAIGDEDIEESDVGDLMD) constitute a propeptide that is removed on maturation. 6 positions are modified to leucine amide: L161, L172, L188, L200, L213, and L232. Positions 236–251 (SDDIDFRELEEKFAED) are excised as a propeptide. Leucine amide is present on L264. Residues 268–345 (EVEPSELEAV…ITPEEFSRMV (78 aa)) constitute a propeptide that is removed on maturation. The tract at residues 273 to 298 (ELEAVRNEEKDNSSVHDKKNNTNDMH) is disordered. At L353 the chain carries Leucine amide. I364 carries the post-translational modification Isoleucine amide. Positions 368 to 370 (SER) are excised as a propeptide.

Belongs to the allatostatin family. Brain, subesophageal ganglion and corpus allatum.

Its subcellular location is the secreted. In terms of biological role, neuropeptide inhibitors of juvenile hormone synthesis and gut muscle contraction. This Diploptera punctata (Pacific beetle cockroach) protein is Allatostatins.